A 157-amino-acid chain; its full sequence is 6,7-dimethyl-8-ribityllumazine synthase (157 aa).

5-amino-6-(D-ribitylamino)uracil is bound by residues Phe22, 56 to 58 (AFE), and 81 to 83 (VLI). Residue 86–87 (ET) coordinates (2S)-2-hydroxy-3-oxobutyl phosphate. Catalysis depends on His89, which acts as the Proton donor. Residue Phe114 coordinates 5-amino-6-(D-ribitylamino)uracil. Arg128 contributes to the (2S)-2-hydroxy-3-oxobutyl phosphate binding site.

The protein belongs to the DMRL synthase family.

It carries out the reaction (2S)-2-hydroxy-3-oxobutyl phosphate + 5-amino-6-(D-ribitylamino)uracil = 6,7-dimethyl-8-(1-D-ribityl)lumazine + phosphate + 2 H2O + H(+). It functions in the pathway cofactor biosynthesis; riboflavin biosynthesis; riboflavin from 2-hydroxy-3-oxobutyl phosphate and 5-amino-6-(D-ribitylamino)uracil: step 1/2. In terms of biological role, catalyzes the formation of 6,7-dimethyl-8-ribityllumazine by condensation of 5-amino-6-(D-ribitylamino)uracil with 3,4-dihydroxy-2-butanone 4-phosphate. This is the penultimate step in the biosynthesis of riboflavin. This chain is 6,7-dimethyl-8-ribityllumazine synthase, found in Chlamydia trachomatis serovar L2 (strain ATCC VR-902B / DSM 19102 / 434/Bu).